Reading from the N-terminus, the 425-residue chain is Elongation factor 1-alpha (425 aa).

One can recognise a tr-type G domain in the interval 5–221 (KPHMNLAVIG…DLFKMPDMPT (217 aa)). A G1 region spans residues 14-21 (GHIDHGKS). 14–21 (GHIDHGKS) is a binding site for GTP. Mg(2+) is bound at residue S21. Residues 70–74 (GITID) are G2. The G3 stretch occupies residues 91–94 (DCPG). Residues 91–95 (DCPGH) and 146–149 (NKMD) contribute to the GTP site. The G4 stretch occupies residues 146–149 (NKMD). Residues 185–187 (SAF) form a G5 region.

This sequence belongs to the TRAFAC class translation factor GTPase superfamily. Classic translation factor GTPase family. EF-Tu/EF-1A subfamily.

The protein resides in the cytoplasm. It carries out the reaction GTP + H2O = GDP + phosphate + H(+). Its function is as follows. GTP hydrolase that promotes the GTP-dependent binding of aminoacyl-tRNA to the A-site of ribosomes during protein biosynthesis. The polypeptide is Elongation factor 1-alpha (Methanocorpusculum labreanum (strain ATCC 43576 / DSM 4855 / Z)).